We begin with the raw amino-acid sequence, 312 residues long: Acetyl-coenzyme A carboxylase carboxyl transferase subunit alpha (312 aa).

The region spanning 36–286 is the CoA carboxyltransferase C-terminal domain; the sequence is RLDKEVKSIY…KEYFLDALRT (251 aa).

The protein belongs to the AccA family. As to quaternary structure, acetyl-CoA carboxylase is a heterohexamer composed of biotin carboxyl carrier protein (AccB), biotin carboxylase (AccC) and two subunits each of ACCase subunit alpha (AccA) and ACCase subunit beta (AccD).

It localises to the cytoplasm. It catalyses the reaction N(6)-carboxybiotinyl-L-lysyl-[protein] + acetyl-CoA = N(6)-biotinyl-L-lysyl-[protein] + malonyl-CoA. Its pathway is lipid metabolism; malonyl-CoA biosynthesis; malonyl-CoA from acetyl-CoA: step 1/1. Functionally, component of the acetyl coenzyme A carboxylase (ACC) complex. First, biotin carboxylase catalyzes the carboxylation of biotin on its carrier protein (BCCP) and then the CO(2) group is transferred by the carboxyltransferase to acetyl-CoA to form malonyl-CoA. This chain is Acetyl-coenzyme A carboxylase carboxyl transferase subunit alpha, found in Helicobacter pylori (strain ATCC 700392 / 26695) (Campylobacter pylori).